The sequence spans 172 residues: Adenine phosphoribosyltransferase (172 aa).

It belongs to the purine/pyrimidine phosphoribosyltransferase family. Homodimer.

Its subcellular location is the cytoplasm. It catalyses the reaction AMP + diphosphate = 5-phospho-alpha-D-ribose 1-diphosphate + adenine. It functions in the pathway purine metabolism; AMP biosynthesis via salvage pathway; AMP from adenine: step 1/1. Its function is as follows. Catalyzes a salvage reaction resulting in the formation of AMP, that is energically less costly than de novo synthesis. In Crocosphaera subtropica (strain ATCC 51142 / BH68) (Cyanothece sp. (strain ATCC 51142)), this protein is Adenine phosphoribosyltransferase.